The primary structure comprises 626 residues: DNA primase (626 aa).

A CHC2-type zinc finger spans residues 39–63 (CPFHGEKTPSFSVSPEKQIFHCFGC). The Toprim domain maps to 264–346 (EEITLMEGFM…DVFVLQLPAG (83 aa)). Mg(2+) is bound by residues E270, D314, and D316.

This sequence belongs to the DnaG primase family. In terms of assembly, monomer. Interacts with DnaB. It depends on Zn(2+) as a cofactor. Requires Mg(2+) as cofactor.

It carries out the reaction ssDNA + n NTP = ssDNA/pppN(pN)n-1 hybrid + (n-1) diphosphate.. Functionally, RNA polymerase that catalyzes the synthesis of short RNA molecules used as primers for DNA polymerase during DNA replication. This chain is DNA primase, found in Listeria innocua serovar 6a (strain ATCC BAA-680 / CLIP 11262).